Reading from the N-terminus, the 235-residue chain is Carboxy-S-adenosyl-L-methionine synthase (235 aa).

S-adenosyl-L-methionine contacts are provided by residues tyrosine 35, 60–62 (GCS), 83–84 (DN), asparagine 124, and arginine 191.

This sequence belongs to the class I-like SAM-binding methyltransferase superfamily. Cx-SAM synthase family. Homodimer.

The catalysed reaction is prephenate + S-adenosyl-L-methionine = carboxy-S-adenosyl-L-methionine + 3-phenylpyruvate + H2O. Catalyzes the conversion of S-adenosyl-L-methionine (SAM) to carboxy-S-adenosyl-L-methionine (Cx-SAM). The polypeptide is Carboxy-S-adenosyl-L-methionine synthase (Campylobacter jejuni subsp. jejuni serotype O:2 (strain ATCC 700819 / NCTC 11168)).